An 888-amino-acid chain; its full sequence is Alanine--tRNA ligase (888 aa).

Positions 571, 575, 674, and 678 each coordinate Zn(2+).

Belongs to the class-II aminoacyl-tRNA synthetase family. Zn(2+) is required as a cofactor.

The protein localises to the cytoplasm. It carries out the reaction tRNA(Ala) + L-alanine + ATP = L-alanyl-tRNA(Ala) + AMP + diphosphate. Its function is as follows. Catalyzes the attachment of alanine to tRNA(Ala) in a two-step reaction: alanine is first activated by ATP to form Ala-AMP and then transferred to the acceptor end of tRNA(Ala). Also edits incorrectly charged Ser-tRNA(Ala) and Gly-tRNA(Ala) via its editing domain. The chain is Alanine--tRNA ligase from Nocardia farcinica (strain IFM 10152).